The primary structure comprises 470 residues: Glutamate--tRNA ligase 2 (470 aa).

Residues 11-21 (PSPTGHLHLGG) carry the 'HIGH' region motif. Residues 238–242 (KLSKR) carry the 'KMSKS' region motif. Residue Lys241 coordinates ATP.

This sequence belongs to the class-I aminoacyl-tRNA synthetase family. Glutamate--tRNA ligase type 1 subfamily. Monomer.

It is found in the cytoplasm. It carries out the reaction tRNA(Glu) + L-glutamate + ATP = L-glutamyl-tRNA(Glu) + AMP + diphosphate. Functionally, catalyzes the attachment of glutamate to tRNA(Glu) in a two-step reaction: glutamate is first activated by ATP to form Glu-AMP and then transferred to the acceptor end of tRNA(Glu). This Ehrlichia ruminantium (strain Gardel) protein is Glutamate--tRNA ligase 2.